A 54-amino-acid polypeptide reads, in one-letter code: uncharacterized protein (54 aa).

The disordered stretch occupies residues 1–54 (MSKKSTPMTKDAASRIQSSAAKSGGDVSSGSFASRAQSAAAINANNTSNSTGKK). Over residues 28–54 (SSGSFASRAQSAAAINANNTSNSTGKK) the composition is skewed to low complexity.

This is an uncharacterized protein from Dictyostelium discoideum (Social amoeba).